Here is a 249-residue protein sequence, read N- to C-terminus: Aquaporin TIP4-3 (249 aa).

2 helical membrane passes run 20-40 (GVLG…GAAM) and 56-76 (TAVA…GFHI). Residues 82–84 (NPA) carry the NPA 1 motif. Transmembrane regions (helical) follow at residues 100–122 (SSLY…RWLT), 141–161 (GVVA…ATIL), and 169–189 (GAGP…GAAL). The NPA 2 motif lies at 195–197 (NPA). Residues 214–234 (VYWVGPLAGGPLAVLVYECCF) form a helical membrane-spanning segment.

The protein belongs to the MIP/aquaporin (TC 1.A.8) family. TIP (TC 1.A.8.10) subfamily.

Its subcellular location is the vacuole membrane. Aquaporins facilitate the transport of water and small neutral solutes across cell membranes. This chain is Aquaporin TIP4-3 (TIP4-3), found in Zea mays (Maize).